Here is a 181-residue protein sequence, read N- to C-terminus: Lectin beta-1 and beta-2 chains (181 aa).

2 residues coordinate Mn(2+): Glu119 and Asp121. Ca(2+) is bound by residues Asp121, Phe123, Asn125, and Asp129. The Mn(2+) site is built by Asp129 and His136.

It belongs to the leguminous lectin family. Tetramer of two alpha and two beta chains.

This is Lectin beta-1 and beta-2 chains from Lathyrus ochrus (Cyprus-vetch).